The following is a 1927-amino-acid chain: Lactase/phlorizin hydrolase (1927 aa).

An N-terminal signal peptide occupies residues 1–19 (MELSWHVVFIALLSFSCWG). Positions 20 to 868 (SDWESDRNFI…NTVNLPSKVR (849 aa)) are cleaved as a propeptide — XBetaGly. Over 20-1882 (SDWESDRNFI…LMLGTTEAQT (1863 aa)) the chain is Extracellular. An N-linked (GlcNAc...) asparagine glycan is attached at asparagine 42. Residues 44–286 (SGLLGDQSSN…FIFNLKLPDC (243 aa)) are glycosyl hydrolase-1 1; Region I. The glycosyl hydrolase-1 2; Region II stretch occupies residues 362–855 (IWEAFANQSR…GFLTKGAKRL (494 aa)). N-linked (GlcNAc...) asparagine glycosylation is found at asparagine 368, asparagine 418, asparagine 512, asparagine 821, asparagine 934, asparagine 946, and asparagine 989. The interval 902–1366 (TFRDDFLWGV…EVITNNGMPL (465 aa)) is glycosyl hydrolase-1 3; Region III. Phlorizin hydrolase/glycosylceramidase activity. Catalysis depends on glutamate 1065, which acts as the Proton donor; for phlorizin hydrolase/Glycosylceramidase activity. A glycan (N-linked (GlcNAc...) asparagine) is linked at asparagine 1174. The segment at 1220–1244 (RLNPPSYEDDQEMAEEEDPSWPSTA) is disordered. The segment covering 1226-1238 (YEDDQEMAEEEDP) has biased composition (acidic residues). Catalysis depends on glutamate 1273, which acts as the Nucleophile; for phlorizin hydrolase/Glycosylceramidase activity. 2 N-linked (GlcNAc...) asparagine glycosylation sites follow: asparagine 1340 and asparagine 1508. The glycosyl hydrolase-1 4; Region IV. Lactase activity stretch occupies residues 1373–1846 (LYGRFPEGFI…CNGFPDPATG (474 aa)). Glutamate 1538 serves as the catalytic Proton donor; for lactase activity. The required for homodimerization and transport to the plasma membrane stretch occupies residues 1647–1927 (RDRSLAAGLN…QQELSPVSSF (281 aa)). 2 N-linked (GlcNAc...) asparagine glycosylation sites follow: asparagine 1656 and asparagine 1672. Glutamate 1749 acts as the Nucleophile; for lactase activity in catalysis. N-linked (GlcNAc...) asparagine glycosylation is found at asparagine 1761 and asparagine 1814. Residues 1883 to 1901 (ALYVLFSLVLLGVCGLAFL) traverse the membrane as a helical segment. Residues 1902 to 1927 (SYKYCKRSKQGKTQRSQQELSPVSSF) are Cytoplasmic-facing.

This sequence belongs to the glycosyl hydrolase 1 family. In terms of assembly, homodimer. N-glycosylated. Specifically expressed in small intestine.

It is found in the apical cell membrane. It catalyses the reaction lactose + H2O = beta-D-galactose + D-glucose. It carries out the reaction phlorizin + H2O = phloretin + beta-D-glucose. The enzyme catalyses D-cellobiose + H2O = beta-D-glucose + D-glucose. The catalysed reaction is quercetin 4'-O-beta-D-glucoside + H2O = quercetin + beta-D-glucose. It catalyses the reaction quercetin 3-O-beta-D-glucoside + H2O = quercetin + beta-D-glucose. It carries out the reaction kaempferol 3-O-beta-D-glucoside + H2O = kaempferol + beta-D-glucose. The enzyme catalyses luteolin 7-O-beta-D-glucoside + H2O = luteolin + beta-D-glucose. The catalysed reaction is luteolin 4'-O-beta-D-glucoside + H2O = luteolin + beta-D-glucose. It catalyses the reaction (2S)-naringenin 7-O-beta-D-glucoside + H2O = (2S)-naringenin + beta-D-glucose. It carries out the reaction eriodictyol-7-O-beta-D-glucoside + H2O = (S)-eriodictyol + beta-D-glucose. The enzyme catalyses apigenin 7-O-beta-D-glucoside + H2O = apigenin + beta-D-glucose. The catalysed reaction is daidzein 7-O-beta-D-glucoside + H2O = daidzein + beta-D-glucose + H(+). It catalyses the reaction genistein 7-O-beta-D-glucoside + H2O = genistein + beta-D-glucose. It carries out the reaction a beta-D-galactosyl-N-acylsphingosine + H2O = a ceramide + beta-D-galactose.. The enzyme catalyses beta-D-glucosyl-(1&lt;-&gt;1')-N-hexadecanoylsphing-4-enine + H2O = N-hexadecanoylsphing-4-enine + beta-D-glucose. The catalysed reaction is beta-D-galactosyl-(1&lt;-&gt;1')-N-hexadecanoylsphing-4-enine + H2O = beta-D-galactose + N-hexadecanoylsphing-4-enine. It catalyses the reaction beta-D-galactosyl-(1&lt;-&gt;1')-N-hexadecanoylsphinganine + H2O = N-hexadecanoylsphinganine + beta-D-galactose. It carries out the reaction beta-D-glucosyl-(1&lt;-&gt;1')-N-hexadecanoylsphinganine + H2O = N-hexadecanoylsphinganine + beta-D-glucose. In terms of biological role, broad specificity glycosidase of the intestinal brush border membrane that hydrolyzes lactose, the main sugar in mammalian milk, to produce D-glucose and D-galactose. The mature protein is composed of two domains that catalyze the hydrolysis of beta-glucopyranosides and beta-galactopyranosides, with a preference for hydrophilic aglycones (in lactose and cellobiose) for one domain and hydrophobic aglycones (in phlorizin and glycosylceramides) for the other. The chain is Lactase/phlorizin hydrolase from Homo sapiens (Human).